The following is a 184-amino-acid chain: uncharacterized protein (184 aa).

This sequence belongs to the PhzF family.

Its subcellular location is the cytoplasm. It localises to the nucleus. This is an uncharacterized protein from Schizosaccharomyces pombe (strain 972 / ATCC 24843) (Fission yeast).